Reading from the N-terminus, the 743-residue chain is Homeobox-leucine zipper protein PROTODERMAL FACTOR 2 (743 aa).

The tract at residues 1–72 (MYHPNMFESH…KKRYHRHTQR (72 aa)) is disordered. The span at 30–39 (SREDDFETKS) shows a compositional bias: basic and acidic residues. Over residues 60-71 (PNKKKRYHRHTQ) the composition is skewed to basic residues. The homeobox DNA-binding region spans 62–121 (KKKRYHRHTQRQIQELESFFKECPHPDDKQRKELSRDLNLEPLQVKFWFQNKRTQMKAQS). The stretch at 110-192 (FQNKRTQMKA…DRISAIAAKY (83 aa)) forms a coiled coil. The 233-residue stretch at 244–476 (SETDKPIIVE…LERQCERLAS (233 aa)) folds into the START domain.

This sequence belongs to the HD-ZIP homeobox family. Class IV subfamily. Interacts with GAI/RGA2, RGA/RGA1/GRS, RGL2/SCL19 and ATML1. Binds to AIL7/PLT7, ANT, BBM and AIL1. In terms of tissue distribution, specifically expressed in the layer 1 (L1) of shoot meristems.

The protein localises to the nucleus. Probable transcription factor that binds to the L1 box DNA sequence 5'-TAAATG[CT]A-3'. Plays a role in maintaining the identity of L1 cells, possibly by interacting with their L1 box or other target-gene promoters; binds to the LIP1 gene promoter and stimulates its expression upon imbibition. Acts as a positive regulator of gibberellins (GAs)-regulated epidermal gene expression (e.g. LIP1, LIP2, LTP1, FDH and PDF1). Functionally redundant to ATML1. Involved, together with HDG proteins (e.g. HDG1, HDG2, HDG5 and HDG12), in the regulation of flower organs development by promoting the expression of APETALA 3 (AP3) in the epidermis and internal cell layers of developing flowers. Seems to promote cell differentiation. This is Homeobox-leucine zipper protein PROTODERMAL FACTOR 2 from Arabidopsis thaliana (Mouse-ear cress).